An 80-amino-acid polypeptide reads, in one-letter code: Protein YibX (80 aa).

This is Protein YibX from Escherichia coli (strain K12).